Consider the following 249-residue polypeptide: uncharacterized protein (249 aa).

The protein belongs to the chlamydial CPn_0206/CT203/TC_0475 family.

This is an uncharacterized protein from Chlamydia muridarum (strain MoPn / Nigg).